The chain runs to 174 residues: Ubiquitin-like protein 4B (174 aa).

The Ubiquitin-like domain occupies 1-76; that stretch reads MFLTVKLLLG…INVIMQPLEK (76 aa). Positions 141–156 are enriched in basic and acidic residues; sequence EPHVEPAGERELEAKA. A disordered region spans residues 141–174; the sequence is EPHVEPAGERELEAKARPQSSCDMEEKEEAAADQ. Residues 163 to 174 show a composition bias toward acidic residues; it reads DMEEKEEAAADQ.

It is found in the cytoplasm. The polypeptide is Ubiquitin-like protein 4B (UBL4B) (Homo sapiens (Human)).